The sequence spans 1382 residues: MAQAYVGQKRIRRYYGNIREVLEMPNLIEVQKSSYDLFLRSGDAEGHQDGEGIQGVFQSVFPIKDFNETATLEFVKYELEKPKYDVEECQSRDMTYAAPLKVTLRLIVFDVDETTGAKSVKDIKEQDVYMGDMPLMTQNGTFIVNGTERVVVSQMHRSPGVFFDHDRGKTHSSGKLLFACRIIPYRGSWLDFEFDAKDLVFARIDRRRKLPVTTLLYALGMDQEGIMDAFYNTVDYKLQRAGKGQAAGWVTKFFPERVRGTRPSFDLVNAETGEIITKAGDKVTPRLVKQLAEKGDINLLLPFEKIVGRFVAKDIINEQTGLIYAEAGDEITVEYDRDGEISGGLLKVLLDNGIEDIPVLDIDHVNVGPYIRNTMAADKNMSRDGALMDIYRVMRPGEPPTVEAASALFDSLFFDSERYDLSAVGRVKMNMRLDLDAPDTQRTLRKEDIIACIRGLVELRDGKGEIDDIDHLGNRRVRSVGELMENQYRIGLLRMERAIRERMSGVEIDTVMPQDLINAKPAAAAVREFFGSSQLSQFMDQTNPLSEVTDKRRLSALGPGGLTRERAGFEVRDVHPTHYGRMCPIETPEGQNIGLINSLATFARVNKYGFIETPYRKVVEGKVTDEVVYMSATEEMRHTIAQANATLDESGKFVDELVSTRQAGDFMLNPVEAVDLIDVSPKQLVSVAAALIPFLENDDANRALMGSNMQRQAVPLLRAEAPFVGTGMEATVARDSGAAIMARRGGIIDQVDAQRIVIRATEDLGAGDAGVDIYRLRKFKRSNQSSTINQRPLVKVGDKVVKGQVVADGPSTDQGELAIGRNVVVAFMPWNGYNYEDSILISERIHRDDVFTSIHIDEYEVAARDTKLGPEEITRDIPNVGEEALRNLDEAGIVYIGAEVGPGDILVGKITPKGESPMTPEEKLLRAIFGEKASDVRDTSLRLPPGAYGTIVEVRVFNRHGVDKDERALQIEREEVERLARDRDDELAILERNIYARLKSLIMGKEVVKGPKGIRAGAVVDEDLLGQLSRGQWWQLAVADEDTAKEVEALNQQFDAQKRALDNRFDDKVEKVRQGDDLPPGVMKMVKVFVAVKRKLQAGDKMAGRHGNKGVVSKVVPIEDMPFLSDGTPVDLVFNPLGVPSRMNVGQILETHMGWASRGLGIKIDEALQDYRRNGDMTPVREAMQNGYGDDFYAETFEGMEDETLLEHADAVRGGVPISTPVFDGAKEADINDALRRAGFDTSGQSIVFDGRTGEQFARPVTVGMKYVLKLHHLVDDKMHARSTGPYSLVTQQPLGGKAQFGGQRLGEMEVWALEAYGAAYTLQEMLTVKSDDVAGRTKVYESIVKGEDNFEAGVPESFNVLVKEVRGLGLNMELLDAEDEE.

It belongs to the RNA polymerase beta chain family. In terms of assembly, the RNAP catalytic core consists of 2 alpha, 1 beta, 1 beta' and 1 omega subunit. When a sigma factor is associated with the core the holoenzyme is formed, which can initiate transcription.

The enzyme catalyses RNA(n) + a ribonucleoside 5'-triphosphate = RNA(n+1) + diphosphate. DNA-dependent RNA polymerase catalyzes the transcription of DNA into RNA using the four ribonucleoside triphosphates as substrates. In Paracoccus denitrificans (strain Pd 1222), this protein is DNA-directed RNA polymerase subunit beta.